The primary structure comprises 410 residues: Mitochondrial potassium channel (410 aa).

Residues 1–35 (MTGCSPVFTMQQVVGVSHRLVWRTFRGTDLLMTRT) constitute a mitochondrion transit peptide. Residues 36–201 (LCSPGPSRPG…KERTRAERTK (166 aa)) are Mitochondrial matrix-facing. Residues 116–143 (VREAREDLEAQQTKLKEVRDRLDRVSRE) are a coiled coil. Residues 202–222 (NWSLIGSVLGALIGVAGSTYV) traverse the membrane as a helical segment. Residues 223–385 (NRVRLQELKA…RLEAQANRNA (163 aa)) are Mitochondrial intermembrane-facing. The interval 276-296 (GQDQGSGSPTGPSSPRGKDID) is disordered. Residues 280 to 290 (GSGSPTGPSSP) are compositionally biased toward low complexity. Residues 386 to 406 (ISSTLVTCVTFMATLPLLYML) form a helical membrane-spanning segment. At 407–410 (FKTS) the chain is on the mitochondrial matrix side.

The mitochondrial potassium channel (mitoK(ATP)) forms a heteromultimer.

It is found in the mitochondrion inner membrane. It carries out the reaction K(+)(in) = K(+)(out). Channel activity inhibited by ATP via ABCB8/MITOSUR subunit. In terms of biological role, pore-forming subunit of the mitochondrial ATP-gated potassium channel (mitoK(ATP)). Together with ATP-binding subunit ABCB8/MITOSUR of the mitoK(ATP) channel, mediates ATP-dependent K(+) currents across the mitochondrial inner membrane. An increase in ATP intracellular levels closes the channel, inhibiting K(+) transport, whereas a decrease in ATP levels enhances K(+) uptake in the mitochondrial matrix. May contribute to the homeostatic control of cellular metabolism under stress conditions by regulating the mitochondrial matrix volume. This is Mitochondrial potassium channel from Rattus norvegicus (Rat).